The sequence spans 97 residues: Exodeoxyribonuclease 7 small subunit (97 aa).

Positions 1 to 21 (MAKTATPGACASDPGSGPLPE) are disordered.

Belongs to the XseB family. Heterooligomer composed of large and small subunits.

The protein resides in the cytoplasm. It carries out the reaction Exonucleolytic cleavage in either 5'- to 3'- or 3'- to 5'-direction to yield nucleoside 5'-phosphates.. In terms of biological role, bidirectionally degrades single-stranded DNA into large acid-insoluble oligonucleotides, which are then degraded further into small acid-soluble oligonucleotides. The sequence is that of Exodeoxyribonuclease 7 small subunit from Burkholderia mallei (strain NCTC 10247).